Consider the following 172-residue polypeptide: MALESLFKSIHTKTSLSSSIVFIFKGKACLLTSKSRIQESFAELNSFTSLVLLIENHVLLHAREAVNEVQVVNDSSWDELVIGSETPVLVDFWAPWCGPCRMIAPIIDELAKEYAGKIKCYKLNTDESPNTATKYGIRSIPTVLFFKNGERKDSVIGAVPKATLSEKVEKYI.

Residues 1-60 constitute a chloroplast transit peptide; it reads MALESLFKSIHTKTSLSSSIVFIFKGKACLLTSKSRIQESFAELNSFTSLVLLIENHVLL. In terms of domain architecture, Thioredoxin spans 61–172; that stretch reads HAREAVNEVQ…TLSEKVEKYI (112 aa). Catalysis depends on nucleophile residues Cys97 and Cys100. A disulfide bridge connects residues Cys97 and Cys100.

This sequence belongs to the thioredoxin family. Plant M-type subfamily. As to quaternary structure, forms a complex with heterodimeric ferredoxin-thioredoxin reductase (FTR) and ferredoxin.

Its subcellular location is the plastid. The protein localises to the chloroplast. Participates in various redox reactions through the reversible oxidation of the active center dithiol to a disulfide. The M form is known to activate NADP-malate dehydrogenase. The polypeptide is Thioredoxin M-type, chloroplastic (Pisum sativum (Garden pea)).